Reading from the N-terminus, the 286-residue chain is MIGKPRGRRGVNLQILPSAMTVLSICAGLTAIKFALEHQPKAAMALIAAAAILDGLDGRVARILDAQSRMGAEIDSLADAVNFGVTPALVLYVSMLSKWPVGWVVVLLYAVCVVLRLARYNALQDDGTQPAYAHEFFVGMPAPAGAVSMIGLLALKMQFGEGWWTSVWFLSFWVTGTSILLVSGIPMKKMHAVSVPPNYAAALLAVLAICAAAAVLAPYLLIWVIIIAYMCHIPFAVRSQRWLAQHPEVWDDKPKQRRAVRRASRRAHPYRPSMARLGLRKPGRRL.

5 consecutive transmembrane segments (helical) span residues 15 to 35, 95 to 115, 135 to 155, 167 to 187, and 207 to 227; these read ILPSAMTVLSICAGLTAIKFA, MLSKWPVGWVVVLLYAVCVVL, EFFVGMPAPAGAVSMIGLLAL, VWFLSFWVTGTSILLVSGIPM, and LAICAAAAVLAPYLLIWVIII.

Belongs to the CDP-alcohol phosphatidyltransferase class-I family.

The protein resides in the cell membrane. It catalyses the reaction a CDP-1,2-diacyl-sn-glycerol + L-serine = a 1,2-diacyl-sn-glycero-3-phospho-L-serine + CMP + H(+). The protein is CDP-diacylglycerol--serine O-phosphatidyltransferase (pssA) of Mycobacterium bovis (strain ATCC BAA-935 / AF2122/97).